We begin with the raw amino-acid sequence, 194 residues long: Thiol:disulfide interchange protein CycY (194 aa).

An N-terminal signal peptide occupies residues Met-1–Ser-37. In terms of domain architecture, Thioredoxin spans Ala-46–Glu-190. Residues Cys-92 and Cys-95 are joined by a disulfide bond.

The protein belongs to the thioredoxin family. DsbE subfamily.

It is found in the periplasm. Its function is as follows. Required for disulfide bond formation in some periplasmic proteins. Also acts as a disulfide oxidoreductase in cytochromes c biogenesis. The cysteines of apocytochromes c must be in the reduced state for covalent linkage between the two moieties to occur. The protein is Thiol:disulfide interchange protein CycY (cycY) of Bradyrhizobium diazoefficiens (strain JCM 10833 / BCRC 13528 / IAM 13628 / NBRC 14792 / USDA 110).